Here is a 428-residue protein sequence, read N- to C-terminus: GTPase Obg (428 aa).

Residues 1-158 enclose the Obg domain; it reads MFVDQTKIDV…RTLRLELKVL (158 aa). One can recognise an OBG-type G domain in the interval 159-328; the sequence is ADVGLVGFPS…LMGKTADLVE (170 aa). GTP-binding positions include 165-172, 190-194, 212-215, 282-285, and 309-311; these read GFPSVGKS, FTTLT, DLPG, TQMD, and SSV. Mg(2+) is bound by residues Ser172 and Thr192. Positions 350 to 428 constitute an OCT domain; the sequence is YKKPEDEGFK…IADFTFEFVD (79 aa).

It belongs to the TRAFAC class OBG-HflX-like GTPase superfamily. OBG GTPase family. Monomer. The cofactor is Mg(2+).

Its subcellular location is the cytoplasm. In terms of biological role, an essential GTPase which binds GTP, GDP and possibly (p)ppGpp with moderate affinity, with high nucleotide exchange rates and a fairly low GTP hydrolysis rate. Plays a role in control of the cell cycle, stress response, ribosome biogenesis and in those bacteria that undergo differentiation, in morphogenesis control. This is GTPase Obg from Lactobacillus johnsonii (strain CNCM I-12250 / La1 / NCC 533).